A 238-amino-acid chain; its full sequence is Small proline-rich protein 3 (238 aa).

The disordered stretch occupies residues 1-67 (MSSYQQKQPF…CSTKVPEPGN (67 aa)). An N-acetylserine modification is found at Ser-2. 21 repeat units span residues 52-59 (TKIPEPCS), 60-67 (TKVPEPGN), 68-75 (TVVLEPDY), 76-83 (TTMPGPCS), 84-91 (TNITEPDY), 92-99 (TTIPGPCS), 100-107 (TNITEPDY), 108-115 (TTIPGPCS), 116-123 (TNIPGPDR), 124-131 (TVVPGSCS), 132-139 (TNITEPDY), 140-147 (TTIPGPSS), 148-155 (TKIPDPGC), 156-163 (AMVPGPSP), 164-175 (SSTSEPSSEPCS), 176-183 (INVREPGY), 184-191 (MNASEPTH), 192-199 (AKVPDQGY), 200-207 (TKIPDQGS), 208-215 (SKVPEPCQ), and 216-223 (SRVPEVCP). The 21 X 8 AA approximate tandem repeats stretch occupies residues 52–223 (TKIPEPCSTK…CQSRVPEVCP (172 aa)). Residues 110-238 (IPGPCSTNIP…VSAKQKTKQK (129 aa)) form a disordered region. Over residues 163–175 (PSSTSEPSSEPCS) the composition is skewed to low complexity.

It belongs to the cornifin (SPRR) family.

It localises to the cytoplasm. Its function is as follows. Cross-linked envelope protein of keratinocytes. The polypeptide is Small proline-rich protein 3 (Sprr3) (Mus musculus (Mouse)).